The following is a 549-amino-acid chain: Hydroxylamine reductase (549 aa).

The [4Fe-4S] cluster site is built by Cys5, Cys8, Cys17, and Cys23. Hybrid [4Fe-2O-2S] cluster is bound by residues His244, Glu268, Cys312, Cys403, Cys431, Cys456, Glu491, and Lys493. At Cys403 the chain carries Cysteine persulfide.

This sequence belongs to the HCP family. [4Fe-4S] cluster serves as cofactor. The cofactor is hybrid [4Fe-2O-2S] cluster.

It localises to the cytoplasm. It catalyses the reaction A + NH4(+) + H2O = hydroxylamine + AH2 + H(+). Its function is as follows. Catalyzes the reduction of hydroxylamine to form NH(3) and H(2)O. The chain is Hydroxylamine reductase from Caldanaerobacter subterraneus subsp. tengcongensis (strain DSM 15242 / JCM 11007 / NBRC 100824 / MB4) (Thermoanaerobacter tengcongensis).